Here is a 59-residue protein sequence, read N- to C-terminus: Protein translocase subunit SecE (59 aa).

Residues 30–50 (ITVITTVIFFAIFFALIDSGI) form a helical membrane-spanning segment.

The protein belongs to the SecE/SEC61-gamma family. In terms of assembly, component of the Sec protein translocase complex. Heterotrimer consisting of SecY, SecE and SecG subunits. The heterotrimers can form oligomers, although 1 heterotrimer is thought to be able to translocate proteins. Interacts with the ribosome. Interacts with SecDF, and other proteins may be involved. Interacts with SecA.

It localises to the cell membrane. Its function is as follows. Essential subunit of the Sec protein translocation channel SecYEG. Clamps together the 2 halves of SecY. May contact the channel plug during translocation. The protein is Protein translocase subunit SecE of Bacillus licheniformis.